A 37-amino-acid chain; its full sequence is Large ribosomal subunit protein bL36 (37 aa).

The protein belongs to the bacterial ribosomal protein bL36 family.

The chain is Large ribosomal subunit protein bL36 from Polaromonas naphthalenivorans (strain CJ2).